We begin with the raw amino-acid sequence, 775 residues long: DNA polymerase (775 aa).

Belongs to the DNA polymerase type-B family.

It carries out the reaction DNA(n) + a 2'-deoxyribonucleoside 5'-triphosphate = DNA(n+1) + diphosphate. This chain is DNA polymerase (pol), found in Thermococcus sp. (strain 9oN-7).